The chain runs to 313 residues: Nucleoside diphosphate-linked moiety X motif 6 (313 aa).

Positions 138 to 270 constitute a Nudix hydrolase domain; sequence THQVGVAGAV…TSRVARLLLY (133 aa).

This sequence belongs to the Nudix hydrolase family. Monomer and homodimer.

It localises to the cytoplasm. The protein resides in the nucleus. Its subcellular location is the mitochondrion. Its function is as follows. May contribute to the regulation of cell proliferation. The sequence is that of Nucleoside diphosphate-linked moiety X motif 6 (Nudt6) from Mus musculus (Mouse).